Reading from the N-terminus, the 95-residue chain is Acylphosphatase (95 aa).

In terms of domain architecture, Acylphosphatase-like spans 6-94; that stretch reads RVRVIVKGIV…EDFTGFSVRY (89 aa). Catalysis depends on residues Arg-21 and Asn-39.

Belongs to the acylphosphatase family.

The catalysed reaction is an acyl phosphate + H2O = a carboxylate + phosphate + H(+). The sequence is that of Acylphosphatase (acyP) from Caldivirga maquilingensis (strain ATCC 700844 / DSM 13496 / JCM 10307 / IC-167).